Here is a 224-residue protein sequence, read N- to C-terminus: F420-dependent NADP reductase (224 aa).

Residues 9–12 (TGDQ), 31–32 (SR), K36, V74, V100, and A145 each bind NADP(+).

Belongs to the F420-dependent NADP reductase family. In terms of assembly, homotetramer.

The enzyme catalyses reduced coenzyme F420-(gamma-L-Glu)(n) + NADP(+) = oxidized coenzyme F420-(gamma-L-Glu)(n) + NADPH + 2 H(+). Its function is as follows. Catalyzes the reduction of NADP(+) with F420H(2) via hydride transfer, and the reverse reaction, i.e. the reduction of F420 with NADPH. Probably functions in the regeneration of NADPH required in biosynthetic reactions. This chain is F420-dependent NADP reductase, found in Methanothermobacter marburgensis (strain ATCC BAA-927 / DSM 2133 / JCM 14651 / NBRC 100331 / OCM 82 / Marburg) (Methanobacterium thermoautotrophicum).